Consider the following 341-residue polypeptide: Porin-like protein L (341 aa).

An N-terminal signal peptide occupies residues 1–21 (MNKKLIALAVAAASISSVATA).

Belongs to the Gram-negative porin family. Homotrimer.

The protein resides in the cell outer membrane. Functionally, forms pores that allow passive diffusion of small molecules across the outer membrane. The sequence is that of Porin-like protein L (ompL) from Photobacterium profundum (strain SS9).